The chain runs to 916 residues: Transmembrane channel-like protein 2-A (916 aa).

Residues 1-13 are compositionally biased toward basic and acidic residues; that stretch reads MPKKSDTTRKLED. A disordered region spans residues 1-159; it reads MPKKSDTTRK…DEEDESMSEG (159 aa). Residues 1–271 are Cytoplasmic-facing; that stretch reads MPKKSDTTRK…IFLRWMYGMN (271 aa). Residues 14 to 26 are compositionally biased toward acidic residues; the sequence is VGIEIDGDVDSAE. Basic residues-rich tracts occupy residues 31 to 45 and 62 to 72; these read SKGK…GKRG and KGRRAANKKKP. Basic and acidic residues predominate over residues 97–107; sequence NVRERGDGDKK. The span at 108–117 shows a compositional bias: basic residues; the sequence is KSGKKGRRGG. Residues 118 to 138 are compositionally biased toward basic and acidic residues; sequence KKNEKGKGKDSDKDSDKDEKK. A compositionally biased stretch (acidic residues) spans 145–157; the sequence is DESDSDEEDESMS. A helical transmembrane segment spans residues 272-292; that stretch reads LVLFSLTFGLVVIPEVLMGLP. At 293–344 the chain is on the extracellular side; it reads YGSIPRKTVPREDQDTAMDYSVLTDFNGYCKYSVLFYGYYNNQRTIGFLKFR. Residues 345–365 traverse the membrane as a helical segment; sequence LPLSYLMVGIGTFGYSLMVVI. The Cytoplasmic portion of the chain corresponds to 366–438; that stretch reads RTMAKNADVG…ENIHLRRFLR (73 aa). Residues 439–459 traverse the membrane as a helical segment; sequence VLANFLITCTLGGSGYLIYFV. At 460–478 the chain is on the extracellular side; the sequence is VKRSQEFQNMDNLSWYEKN. The helical transmembrane segment at 479–499 threads the bilayer; sequence ELEIIMSLLGLVGPMLFETIA. Topologically, residues 500 to 516 are cytoplasmic; sequence ELEEYHPRIALKWQLGR. The chain crosses the membrane as a helical span at residues 517–537; it reads IFALFLGNLYTFLLALFDEVN. Residues 538-649 are Extracellular-facing; it reads AKLEEEESIK…EFDISGNVLG (112 aa). The chain crosses the membrane as a helical span at residues 650–670; it reads LVFNQGMIWMGAFYAPGLVGI. At 671 to 704 the chain is on the cytoplasmic side; the sequence is NVLRLLSSMYYQCWAVMACNVPHERVFKASKSNN. Residues 705-725 form a helical membrane-spanning segment; it reads FYMGLLLLILFLSLLPVVYTI. Residues 726–762 are Extracellular-facing; it reads MSLPPSFDCGPFSGKERMFDVVMETIDLDLPAFMGTL. Residues 763–783 traverse the membrane as a helical segment; that stretch reads FGYVANPGLVISAVLLMVLAI. Topologically, residues 784-916 are cytoplasmic; sequence YYLNSVSEAY…RGQGPPPRRQ (133 aa). The segment covering 804 to 818 has biased composition (basic and acidic residues); it reads MQMARDEEKNRRNNK. Residues 804–916 form a disordered region; it reads MQMARDEEKN…RGQGPPPRRQ (113 aa). Positions 883 to 892 are enriched in low complexity; that stretch reads ARGPVTRAPG.

The protein belongs to the TMC family. Interacts (via N-terminus) with both isoforms CD1 and CD3 of PCDH15A (via cytoplasmic domain); this interaction is required for mechanotransduction of the hair cells and correct localization of PCDH15A in hair bundles of the hair cells. In adults, expression is restricted to the hair cells of inner ear and lateral line organ. Expressed at higher levels in the larval inner ear than in the lateral-line neuromasts.

The protein localises to the cell membrane. The enzyme catalyses Ca(2+)(in) = Ca(2+)(out). Pore-forming subunit of the mechanotransducer (MET) non-selective cation channel complex located at tips of hair-cell stereocilia. Highly permeable to calcium and likely transports monovalent cations. In Danio rerio (Zebrafish), this protein is Transmembrane channel-like protein 2-A.